Consider the following 430-residue polypeptide: MTISNPRPLLGCIADDFTGATDLANMLVRGGMRTVQSIGIPSAEVAAGLDADAVVIALKSRTTAASEAVAESLAALQWLRDQGCEQIFFKYCSTFDSTAAGNIGQVSEALLEALGSDFTLACPAFPENGRTIFRGHLFVQDQLLSESGMQHHPLTPMTDANLVRVLQSQTRLPVGLLRYDSIAQGVEAVRSRIAELRGQGVALAIADALSDADLYTLGAACADLPLLTGGSGLALGLPENFRRAGKLRDLDAASLPKVAGGEVVLAGSASLATNAQVDAWLEAERPAWRIDPLALAAGEAVVEQALAFAREQQGTVLIYATSTPEEVKAVQRQLGAERAGALVENALGEIARGLRDSGVRRFVVAGGETSGAVVKALDVRLLQIGAQIDPGVPATVSSGGEPLALALKSGNFGGRDFFSKALGQLAGGQA.

Residues Ser-268, 366-369 (GGET), and Gly-410 each bind ATP.

Belongs to the four-carbon acid sugar kinase family.

The catalysed reaction is 3-dehydro-L-erythronate + ATP = 3-dehydro-4-O-phospho-L-erythronate + ADP + H(+). The enzyme catalyses 3-dehydro-D-erythronate + ATP = 3-dehydro-4-O-phospho-D-erythronate + ADP + H(+). Its function is as follows. Catalyzes the ATP-dependent phosphorylation of 3-oxo-tetronate to 3-oxo-tetronate 4-phosphate. In Pseudomonas fluorescens (strain ATCC BAA-477 / NRRL B-23932 / Pf-5), this protein is 3-oxo-tetronate kinase.